Reading from the N-terminus, the 147-residue chain is MDGIFPSTDKMLYENVTIWREASGEYQTATTLSHYNHALPDSGSPCDEFRASLKKNGISSLLTTRGPVTCIKFQIPEDKVISLETLACLEGTIKVVGDYCYITVTTGDTVLEPPTPSQPAPTPEPAVKPQPIATRKRSGLSALLWPF.

The disordered stretch occupies residues 110–133 (VLEPPTPSQPAPTPEPAVKPQPIA). Positions 113 to 128 (PPTPSQPAPTPEPAVK) are enriched in pro residues.

This is an uncharacterized protein from Ictalurid herpesvirus 1 (strain Auburn) (IcHV-1).